The chain runs to 235 residues: Zorya protein ZorB (235 aa).

A helical membrane pass occupies residues 25–44 (LMAGLMMVFMFISIAYMHYV). The OmpA-like domain occupies 87–225 (QTLEVRFKSP…RVTFKVVTNA (139 aa)).

This sequence belongs to the MotB family.

It localises to the cell inner membrane. Its function is as follows. Component of antiviral defense system Zorya type II, composed of ZorA, ZorB and ZorE. Expression of Zorya type II in E.coli (strain MG1655) confers resistance to phages SECphi7 and T7. While most T7 infected Zorya-containing cells undergo abortive infection, a minority produce viable phage progeny. These eventually accumulate to a high multiplicity of infection, leading to culture collapse by 170 minutes after initial infection. ZorA and ZorB probably assemble in the cell inner membrane and exert their effect there. This Escherichia coli (strain ATCC 8739 / DSM 1576 / NBRC 3972 / NCIMB 8545 / WDCM 00012 / Crooks) protein is Zorya protein ZorB.